Here is a 626-residue protein sequence, read N- to C-terminus: MAGERPPLRGPGPGPGEVPGEGPPGPGGTGGGPGRGRPSSYRALRSAVSSLARVDDFHCAEKIGAGFFSEVYKVRHRQSGQVMVLKMNKLPSNRGNTLREVQLMNRLRHPNILRFMGVCVHQGQLHALTEYMNGGTLEQLLSSPEPLSWPVRLHLALDIARGLRYLHSKGVFHRDLTSKNCLVRREDRGFTAVVGDFGLAEKIPVYREGARKEPLAVVGSPYWMAPEVLRGELYDEKADVFAFGIVLCELIARVPADPDYLPRTEDFGLDVPAFRTLVGDDCPLPFLLLAIHCCNLEPSTRAPFTEITQHLEWILEQLPEPAPLTRTALTHNQGSVARGGPSATLPRPDPRLSRSRSDLFLPPSPESPPNWGDNLTRVNPFSLREDLRGGKIKLLDTPSKPVLPLVPPSPFPSTQLPLVTTPETLVQPGTPARRCRSLPSSPELPRRMETALPGPGPPAVGPSAEEKMECEGSSPEPEPPGPAPQLPLAVATDNFISTCSSASQPWSPRSGPVLNNNPPAVVVNSPQGWAGEPWNRAQHSLPRAAALERTEPSPPPSAPREPDEGLPCPGCCLGPFSFGFLSMCPRPTPAVARYRNLNCEAGSLLCHRGHHAKPPTPSLQLPGARS.

A disordered region spans residues 1 to 41; the sequence is MAGERPPLRGPGPGPGEVPGEGPPGPGGTGGGPGRGRPSSY. The segment covering 8 to 26 has biased composition (pro residues); sequence LRGPGPGPGEVPGEGPPGP. Residues 57–314 enclose the Protein kinase domain; sequence FHCAEKIGAG…TEITQHLEWI (258 aa). ATP-binding positions include 63–71 and Lys86; that span reads IGAGFFSEV. Catalysis depends on Asp175, which acts as the Proton acceptor. Position 220 is a phosphoserine; by autocatalysis (Ser220). Disordered stretches follow at residues 331 to 373, 423 to 488, and 529 to 564; these read HNQG…NWGD, ETLV…QLPL, and WAGE…EPDE. An Omega-N-methylarginine modification is found at Arg338. The segment covering 348 to 357 has biased composition (basic and acidic residues); that stretch reads PDPRLSRSRS. Positions 419 to 524 are required for interaction with YWHAB; sequence VTTPETLVQP…NNNPPAVVVN (106 aa). Residues 476–485 are compositionally biased toward pro residues; it reads EPEPPGPAPQ. The segment at 527-624 is required for interaction with PARVA; sequence QGWAGEPWNR…PTPSLQLPGA (98 aa). A required for interaction with SPRED1 and SPRY2. Required for TESK1-mediated dephosphorylation of SPRY2 and SPRY2 inhibition of ERK phosphorylation region spans residues 527 to 626; it reads QGWAGEPWNR…PSLQLPGARS (100 aa).

The protein belongs to the protein kinase superfamily. TKL Ser/Thr protein kinase family. In terms of assembly, interacts (via both C- and N-termini) with SPRY4 (via C-terminus); the interaction inhibits TESK1 kinase activity. Interacts with TAOK1; the interaction inhibits TAOK1 kinase activity. Interacts (via C-terminus) with SPRED1 (via C-terminus); the interaction inhibits TESK1 kinase activity. Interacts (via C-terminus) with PARVA/PARVIN (via C-terminus); the interaction inhibits TESK1 kinase activity. Interacts with YWHAB/14-3-3 beta; the interaction is dependent on the phosphorylation of TESK1 Ser-437 and inhibits TESK1 kinase activity. Interacts with SPRY1, SPRY3 and SPRED2. Interacts (via C-terminus) with SPRY2 (via C-terminus); the interaction disrupts SPRY2 interaction with PPP2CA/PP2A-C, possibly by vesicular sequestration of SPRY2. Therefore dephosphorylation of SPRY2 by the serine/threonine-protein phosphatase 2A (PP2A) holoenzyme is lost, inhibiting its interaction with GRB2. Requires Mg(2+) as cofactor. The cofactor is Mn(2+). Autophosphorylated on serine and tyrosine residues. Expressed in podocytes and renal tubular cells in the kidney (at protein level).

It localises to the cytoplasm. The protein localises to the perinuclear region. Its subcellular location is the cytoskeleton. The protein resides in the microtubule organizing center. It is found in the centrosome. It localises to the cell projection. The protein localises to the lamellipodium. It catalyses the reaction L-seryl-[protein] + ATP = O-phospho-L-seryl-[protein] + ADP + H(+). The catalysed reaction is L-threonyl-[protein] + ATP = O-phospho-L-threonyl-[protein] + ADP + H(+). The enzyme catalyses L-tyrosyl-[protein] + ATP = O-phospho-L-tyrosyl-[protein] + ADP + H(+). Its activity is regulated as follows. Activated by autophosphorylation on Ser-220. Kinase activity is inhibited by SPRED1. In terms of biological role, dual specificity protein kinase activity catalyzing autophosphorylation and phosphorylation of exogenous substrates on both serine/threonine and tyrosine residues. Regulates the cellular cytoskeleton by enhancing actin stress fiber formation via phosphorylation of cofilin and by preventing microtubule breakdown via inhibition of TAOK1/MARKK kinase activity. Inhibits podocyte motility via regulation of actin cytoskeletal dynamics and phosphorylation of CFL1. Positively regulates integrin-mediated cell spreading, via phosphorylation of cofilin. Suppresses ciliogenesis via multiple pathways; phosphorylation of CFL1, suppression of ciliary vesicle directional trafficking to the ciliary base, and by facilitating YAP1 nuclear localization where it acts as a transcriptional corepressor of the TEAD4 target genes AURKA and PLK1. Probably plays a central role at and after the meiotic phase of spermatogenesis. In Homo sapiens (Human), this protein is Dual specificity testis-specific protein kinase 1 (TESK1).